A 158-amino-acid polypeptide reads, in one-letter code: NAD(P)H-quinone oxidoreductase subunit J, chloroplastic (158 aa).

This sequence belongs to the complex I 30 kDa subunit family. As to quaternary structure, NDH is composed of at least 16 different subunits, 5 of which are encoded in the nucleus.

It localises to the plastid. The protein resides in the chloroplast thylakoid membrane. The enzyme catalyses a plastoquinone + NADH + (n+1) H(+)(in) = a plastoquinol + NAD(+) + n H(+)(out). The catalysed reaction is a plastoquinone + NADPH + (n+1) H(+)(in) = a plastoquinol + NADP(+) + n H(+)(out). NDH shuttles electrons from NAD(P)H:plastoquinone, via FMN and iron-sulfur (Fe-S) centers, to quinones in the photosynthetic chain and possibly in a chloroplast respiratory chain. The immediate electron acceptor for the enzyme in this species is believed to be plastoquinone. Couples the redox reaction to proton translocation, and thus conserves the redox energy in a proton gradient. The protein is NAD(P)H-quinone oxidoreductase subunit J, chloroplastic of Eucalyptus globulus subsp. globulus (Tasmanian blue gum).